Reading from the N-terminus, the 260-residue chain is uncharacterized protein (260 aa).

The 159-residue stretch at Leu-8–Lys-166 folds into the PNPLA domain. The GXSXG motif lies at Gly-39–Gly-43. Ser-41 (nucleophile) is an active-site residue. The active-site Proton acceptor is the Asp-153. The short motif at Asp-153–Ala-155 is the DGA/G element.

The protein belongs to the NTE family.

This is an uncharacterized protein from Bacillus subtilis (strain 168).